Consider the following 344-residue polypeptide: Anthranilate phosphoribosyltransferase (344 aa).

5-phospho-alpha-D-ribose 1-diphosphate-binding positions include glycine 84, 87 to 88 (GD), threonine 92, 94 to 97 (NIST), 112 to 120 (KHGNRSVSS), and serine 124. Glycine 84 serves as a coordination point for anthranilate. Residue serine 96 coordinates Mg(2+). Asparagine 115 serves as a coordination point for anthranilate. Residue arginine 170 coordinates anthranilate. Mg(2+) contacts are provided by aspartate 229 and glutamate 230.

The protein belongs to the anthranilate phosphoribosyltransferase family. As to quaternary structure, homodimer. It depends on Mg(2+) as a cofactor.

It carries out the reaction N-(5-phospho-beta-D-ribosyl)anthranilate + diphosphate = 5-phospho-alpha-D-ribose 1-diphosphate + anthranilate. It participates in amino-acid biosynthesis; L-tryptophan biosynthesis; L-tryptophan from chorismate: step 2/5. Catalyzes the transfer of the phosphoribosyl group of 5-phosphorylribose-1-pyrophosphate (PRPP) to anthranilate to yield N-(5'-phosphoribosyl)-anthranilate (PRA). This chain is Anthranilate phosphoribosyltransferase, found in Xylella fastidiosa (strain 9a5c).